A 133-amino-acid polypeptide reads, in one-letter code: Large ribosomal subunit protein bL12 (133 aa).

It belongs to the bacterial ribosomal protein bL12 family. In terms of assembly, homodimer. Part of the ribosomal stalk of the 50S ribosomal subunit. Forms a multimeric L10(L12)X complex, where L10 forms an elongated spine to which 2 to 4 L12 dimers bind in a sequential fashion. Binds GTP-bound translation factors.

Functionally, forms part of the ribosomal stalk which helps the ribosome interact with GTP-bound translation factors. Is thus essential for accurate translation. In Ehrlichia chaffeensis (strain ATCC CRL-10679 / Arkansas), this protein is Large ribosomal subunit protein bL12.